The chain runs to 363 residues: Peptide chain release factor 1 (363 aa).

Gln-237 carries the N5-methylglutamine modification. Over residues 284–297 (ERAKQQSERSEQRR) the composition is skewed to basic and acidic residues. The interval 284-306 (ERAKQQSERSEQRRLAVGSGDRS) is disordered.

The protein belongs to the prokaryotic/mitochondrial release factor family. In terms of processing, methylated by PrmC. Methylation increases the termination efficiency of RF1.

The protein resides in the cytoplasm. In terms of biological role, peptide chain release factor 1 directs the termination of translation in response to the peptide chain termination codons UAG and UAA. This is Peptide chain release factor 1 from Halorhodospira halophila (strain DSM 244 / SL1) (Ectothiorhodospira halophila (strain DSM 244 / SL1)).